Reading from the N-terminus, the 559-residue chain is Dihydroxy-acid dehydratase (559 aa).

Aspartate 78 contacts Mg(2+). Cysteine 119 is a binding site for [2Fe-2S] cluster. Positions 120 and 121 each coordinate Mg(2+). An N6-carboxylysine modification is found at lysine 121. Cysteine 191 is a [2Fe-2S] cluster binding site. Glutamate 442 is a Mg(2+) binding site. Serine 468 (proton acceptor) is an active-site residue.

This sequence belongs to the IlvD/Edd family. In terms of assembly, homodimer. [2Fe-2S] cluster serves as cofactor. Requires Mg(2+) as cofactor.

It carries out the reaction (2R)-2,3-dihydroxy-3-methylbutanoate = 3-methyl-2-oxobutanoate + H2O. The enzyme catalyses (2R,3R)-2,3-dihydroxy-3-methylpentanoate = (S)-3-methyl-2-oxopentanoate + H2O. Its pathway is amino-acid biosynthesis; L-isoleucine biosynthesis; L-isoleucine from 2-oxobutanoate: step 3/4. It participates in amino-acid biosynthesis; L-valine biosynthesis; L-valine from pyruvate: step 3/4. In terms of biological role, functions in the biosynthesis of branched-chain amino acids. Catalyzes the dehydration of (2R,3R)-2,3-dihydroxy-3-methylpentanoate (2,3-dihydroxy-3-methylvalerate) into 2-oxo-3-methylpentanoate (2-oxo-3-methylvalerate) and of (2R)-2,3-dihydroxy-3-methylbutanoate (2,3-dihydroxyisovalerate) into 2-oxo-3-methylbutanoate (2-oxoisovalerate), the penultimate precursor to L-isoleucine and L-valine, respectively. The chain is Dihydroxy-acid dehydratase from Agathobacter rectalis (strain ATCC 33656 / DSM 3377 / JCM 17463 / KCTC 5835 / VPI 0990) (Eubacterium rectale).